The sequence spans 690 residues: eEF1A lysine and N-terminal methyltransferase (690 aa).

Positions 427-451 (AAASSASKKKNKKKAKQPASTGAKD) are disordered. The span at 433–442 (SKKKNKKKAK) shows a compositional bias: basic residues.

The protein belongs to the methyltransferase superfamily.

The catalysed reaction is L-lysyl-[protein] + S-adenosyl-L-methionine = N(6)-methyl-L-lysyl-[protein] + S-adenosyl-L-homocysteine + H(+). It catalyses the reaction N(6)-methyl-L-lysyl-[protein] + S-adenosyl-L-methionine = N(6),N(6)-dimethyl-L-lysyl-[protein] + S-adenosyl-L-homocysteine + H(+). It carries out the reaction N-terminal glycyl-L-lysyl-L-glutamyl-[protein] + 3 S-adenosyl-L-methionine = N-terminal N,N,N-trimethyl-glycyl-L-lysyl-L-glutamyl-[protein] + 3 S-adenosyl-L-homocysteine + 3 H(+). Dual methyltransferase that catalyzes methylation of elongation factor 1-alpha (eef1a1 and eef1a2) at two different positions, and is therefore involved in the regulation of mRNA translation. Via its C-terminus, methylates the N-terminus of eef1a1 and eef1a2. Via its N-terminus dimethylates lysine residues of eef1a1 and eef1a2. This Danio rerio (Zebrafish) protein is eEF1A lysine and N-terminal methyltransferase (mettl13).